A 317-amino-acid chain; its full sequence is Long form salivary protein D7L2 (317 aa).

The N-terminal stretch at 1-20 (MYKLLVALHLILCTVSHVKT) is a signal peptide. 5 disulfides stabilise this stretch: Cys39–Cys76, Cys72–Cys131, Cys181–Cys214, Cys195–Cys316, and Cys255–Cys266. Thromboxane A2 is bound by residues Trp58 and Tyr73. Serotonin-binding residues include Glu182, Tyr264, Asp281, Asp284, and Met308.

Belongs to the PBP/GOBP family. In terms of tissue distribution, female salivary gland.

Its subcellular location is the secreted. Its function is as follows. Modulates blood feeding of female mosquitoes on vertebrate species by binding and sequestering different mediators involved in the host response, such as biogenic amines and eicosanoids. Binds serotonin with high affinity. Binds tryptamine, octopamine, dopamine and noradrenaline with low affinity. Binds leukotriene C4, leukotriene D4, leukotriene E4 and U-46619, a stable analog of thromboxane A2. Does not bind leukotriene B4, adrenaline, histamine and ADP. Inhibits platelet aggregation induced by low concentrations of collagen and arachidonic acid but not by ADP or adrenaline. This chain is Long form salivary protein D7L2, found in Anopheles darlingi (Mosquito).